The following is a 347-amino-acid chain: Phenylalanine--tRNA ligase alpha subunit (347 aa).

The tract at residues 83–111 (QNLSGGDDSGADPTFDPTLPGTRPSLGHI) is disordered. E274 contributes to the Mg(2+) binding site.

This sequence belongs to the class-II aminoacyl-tRNA synthetase family. Phe-tRNA synthetase alpha subunit type 1 subfamily. As to quaternary structure, tetramer of two alpha and two beta subunits. It depends on Mg(2+) as a cofactor.

The protein localises to the cytoplasm. It carries out the reaction tRNA(Phe) + L-phenylalanine + ATP = L-phenylalanyl-tRNA(Phe) + AMP + diphosphate + H(+). The chain is Phenylalanine--tRNA ligase alpha subunit from Rhodopirellula baltica (strain DSM 10527 / NCIMB 13988 / SH1).